The primary structure comprises 306 residues: Glutaminase (306 aa).

7 residues coordinate substrate: serine 64, asparagine 115, glutamate 159, asparagine 166, tyrosine 190, tyrosine 242, and valine 260.

The protein belongs to the glutaminase family. As to quaternary structure, homotetramer.

It catalyses the reaction L-glutamine + H2O = L-glutamate + NH4(+). This is Glutaminase from Vibrio atlanticus (strain LGP32) (Vibrio splendidus (strain Mel32)).